A 50-amino-acid chain; its full sequence is Toxic protein HokE (50 aa).

A helical transmembrane segment spans residues 5 to 25 (YALAAVIVLCLTVLGFTLLVG).

The protein belongs to the Hok/Gef family.

It is found in the cell inner membrane. In terms of biological role, toxic component of a type I toxin-antitoxin (TA) system; if it expressed it could be neutralized by antisense antitoxin RNA SokE. The sequence is that of Toxic protein HokE from Escherichia coli (strain K12).